The following is a 153-amino-acid chain: MTSLGLVMENSQVLPAFLLCSTLLVIKMYAVAVITGQVRLRKKAFANPEDALKRGGLQYCRSDPDVERCLRAHRNDMETIYPFLFLGFVYSFLGPNPLIAWIHFLVVLTGRVVHTVAYLGKMNPRIRSGAYVLAQFACFSMALQILWEVAHHL.

Residues 1–13 (MTSLGLVMENSQV) are Lumenal-facing. The helical transmembrane segment at 14-42 (LPAFLLCSTLLVIKMYAVAVITGQVRLRK) threads the bilayer. Arg39 lines the glutathione pocket. Over 43–61 (KAFANPEDALKRGGLQYCR) the chain is Cytoplasmic. A helical membrane pass occupies residues 62–91 (SDPDVERCLRAHRNDMETIYPFLFLGFVYS). Residue 74 to 78 (RNDME) coordinates glutathione. Topologically, residues 92–98 (FLGPNPL) are lumenal. A helical membrane pass occupies residues 99-120 (IAWIHFLVVLTGRVVHTVAYLG). The glutathione site is built by His114 and Tyr118. Residues 121 to 124 (KMNP) lie on the Cytoplasmic side of the membrane. A helical transmembrane segment spans residues 125 to 153 (RIRSGAYVLAQFACFSMALQILWEVAHHL). A glutathione-binding site is contributed by 127-131 (RSGAY).

This sequence belongs to the MAPEG family. Glutathione is required as a cofactor.

It localises to the membrane. The protein resides in the cytoplasm. The protein localises to the perinuclear region. The enzyme catalyses prostaglandin H2 = prostaglandin E2. It catalyses the reaction 2-glyceryl-prostaglandin H2 = 2-glyceryl-prostaglandin E2. The catalysed reaction is prostaglandin G2 = (15S)-15-hydroperoxy-prostaglandin E2. It carries out the reaction 1-chloro-2,4-dinitrobenzene + glutathione = 2,4-dinitrophenyl-S-glutathione + chloride + H(+). The enzyme catalyses (5S)-hydroperoxy-(6E,8Z,11Z,14Z)-eicosatetraenoate + 2 glutathione = (5S)-hydroxy-(6E,8Z,11Z,14Z)-eicosatetraenoate + glutathione disulfide + H2O. It participates in lipid metabolism; prostaglandin biosynthesis. With respect to regulation, activity is increased following LPS stimulation and down-regulated by the anti-inflammatory glucocorticoid dexamethasone. Functionally, terminal enzyme of the cyclooxygenase (COX)-2-mediated prostaglandin E2 (PGE2) biosynthetic pathway. Catalyzes the glutathione-dependent oxidoreduction of prostaglandin endoperoxide H2 (PGH2) to prostaglandin E2 (PGE2) in response to inflammatory stimuli. Plays a key role in inflammation response, fever and pain. Also catalyzes the oxidoreduction of endocannabinoids into prostaglandin glycerol esters and PGG2 into 15-hydroperoxy-PGE2. In addition, displays low glutathione transferase and glutathione-dependent peroxidase activities, toward 1-chloro-2,4-dinitrobenzene and 5-hydroperoxyicosatetraenoic acid (5-HPETE), respectively. The protein is Prostaglandin E synthase (Ptges) of Rattus norvegicus (Rat).